The sequence spans 283 residues: Pantothenate synthetase (283 aa).

An ATP-binding site is contributed by 30-37; that stretch reads MGNLHLGH. Catalysis depends on His37, which acts as the Proton donor. Gln61 serves as a coordination point for (R)-pantoate. Beta-alanine is bound at residue Gln61. 149–152 contributes to the ATP binding site; the sequence is GQKD. Residue Gln155 participates in (R)-pantoate binding. ATP-binding positions include Ile178 and 186–189; that span reads MSSR.

The protein belongs to the pantothenate synthetase family. Homodimer.

Its subcellular location is the cytoplasm. The catalysed reaction is (R)-pantoate + beta-alanine + ATP = (R)-pantothenate + AMP + diphosphate + H(+). It functions in the pathway cofactor biosynthesis; (R)-pantothenate biosynthesis; (R)-pantothenate from (R)-pantoate and beta-alanine: step 1/1. Its function is as follows. Catalyzes the condensation of pantoate with beta-alanine in an ATP-dependent reaction via a pantoyl-adenylate intermediate. This Shewanella halifaxensis (strain HAW-EB4) protein is Pantothenate synthetase.